The sequence spans 504 residues: MEEFQGYLELDRFQQHDFLYPLIFREYSYALAHGHGLNRYMLLENIGYDNKSSLLIVKRLITTMYQQNYLKISANDSKQNPFFGYNKNLHSKILSEGFAIIVEIPFYLRLISSLEGAEIVRFYNLRSIHSIFPFLEEKFPHLNYSADILIPYPAHLEILVQTLRYRVKDASYLHLLRFFLHEYSNCNSLIITNKSISIFSKSNPRFFLFLYNSYICEYESIFLFLRNQPSHLRLTSSGVLFERLCLYRKIEHFAEVFSNDFPVIPCFLKDPFMHYVRYQGKSILASKDTPLLMNKWKSYLVNLWQCHFDVWSHAASIRINQLSKHSLDFLSYFSSVRRNPAVVRNQMLENSFLLNNAPNKLDTMVPIIPLIGSLAKAKFCNAVGHPISKLTRADLSDFEIINRFLHICRNLSHYYSGSSKKKNMYRIKYILRLSCVKTLARKHKSTARAFLKRVDLEFFQEFFTEEGGFISLIFPRASFALRRLYSGRVWYLDIIFINGLSNHE.

Belongs to the intron maturase 2 family. MatK subfamily.

It localises to the plastid. It is found in the chloroplast. Functionally, usually encoded in the trnK tRNA gene intron. Probably assists in splicing its own and other chloroplast group II introns. The protein is Maturase K of Quercus rubra (Northern red oak).